Here is a 197-residue protein sequence, read N- to C-terminus: Nucleoid occlusion factor SlmA (197 aa).

One can recognise an HTH tetR-type domain in the interval 7–67 (INRREHILQC…GLIEFIEDAI (61 aa)). The segment at residues 30-49 (TTAKLAAEVGVSEAALYRHF) is a DNA-binding region (H-T-H motif).

It belongs to the nucleoid occlusion factor SlmA family. As to quaternary structure, homodimer. Interacts with FtsZ.

The protein localises to the cytoplasm. The protein resides in the nucleoid. Its function is as follows. Required for nucleoid occlusion (NO) phenomenon, which prevents Z-ring formation and cell division over the nucleoid. Acts as a DNA-associated cell division inhibitor that binds simultaneously chromosomal DNA and FtsZ, and disrupts the assembly of FtsZ polymers. SlmA-DNA-binding sequences (SBS) are dispersed on non-Ter regions of the chromosome, preventing FtsZ polymerization at these regions. In Shewanella denitrificans (strain OS217 / ATCC BAA-1090 / DSM 15013), this protein is Nucleoid occlusion factor SlmA.